Consider the following 530-residue polypeptide: Estrogen receptor beta (530 aa).

Residues 1 to 148 (MEIKNSPSSL…SPSAKRDAHF (148 aa)) form a modulating region. Serine 61 is subject to Phosphoserine; alternate. A glycan (O-linked (GlcNAc) serine; alternate) is linked at serine 61. A phosphoserine; by MAPK mark is found at serine 87 and serine 105. 2 NR C4-type zinc fingers span residues 149-169 (CAVCSDYASGYHYGVWSCEGC) and 185-209 (CPATNQCTIDKNRRKSCQACRLRKC). The segment at residues 149-214 (CAVCSDYASG…RLRKCYEVGM (66 aa)) is a DNA-binding region (nuclear receptor). The 235-residue stretch at 264 to 498 (SPEQLVLTLL…DLLLEMLNAH (235 aa)) folds into the NR LBD domain. Polar residues predominate over residues 506–515 (SISGSECCST). The interval 506 to 530 (SISGSECCSTEDSKSKEGSQNLQSQ) is disordered.

Belongs to the nuclear hormone receptor family. NR3 subfamily. As to quaternary structure, binds DNA as a homodimer. Can form a heterodimer with ESR1. Interacts with NCOA1, NCOA3, NCOA5 and NCOA6 coactivators, leading to a strong increase of transcription of target genes. Interacts with UBE1C and AKAP13. Interacts with DNTTIP2. Interacts with CCDC62 in the presence of estradiol/E2; this interaction seems to enhance the transcription of target genes. Interacts with DNAAF4. Interacts with PRMT2. Interacts with CCAR2 (via N-terminus) in a ligand-independent manner. Interacts with RBM39, in the presence of estradiol (E2). Interacts with STUB1/CHIP. Post-translationally, phosphorylation at Ser-87 and Ser-105 recruits NCOA1. As to expression, expressed in prostate, ovary, Leydig cells and in epithelium of the efferent ductules and of the initial segment of the epididymis.

The protein localises to the nucleus. Nuclear hormone receptor. Binds estrogens with an affinity similar to that of ESR1/ER-alpha, and activates expression of reporter genes containing estrogen response elements (ERE) in an estrogen-dependent manner. This chain is Estrogen receptor beta (Esr2), found in Mus musculus (Mouse).